We begin with the raw amino-acid sequence, 234 residues long: Probable chemoreceptor glutamine deamidase CheD 1 (234 aa).

Belongs to the CheD family.

It carries out the reaction L-glutaminyl-[protein] + H2O = L-glutamyl-[protein] + NH4(+). Its function is as follows. Probably deamidates glutamine residues to glutamate on methyl-accepting chemotaxis receptors (MCPs), playing an important role in chemotaxis. The polypeptide is Probable chemoreceptor glutamine deamidase CheD 1 (Albidiferax ferrireducens (strain ATCC BAA-621 / DSM 15236 / T118) (Rhodoferax ferrireducens)).